Here is a 66-residue protein sequence, read N- to C-terminus: Defensin-like peptide 2/4 (66 aa).

The signal sequence occupies residues Met1 to Ala22. Positions Lys23 to Pro24 are excised as a propeptide. A D-methionine; in form DLP-2 modification is found at Met26. Cystine bridges form between Cys33-Cys63, Cys40-Cys56, and Cys48-Cys64.

Post-translationally, stereoinversion of L-Met-26 (in DLP-4) to D-Met-26 (in DLP-2). As to expression, produced by the crural gland and detected in venom from the spur located on each male hind leg. Is also widely expressed in both male and female tissues, including brain, intestine, kidney, lung, spleen and testis.

It is found in the secreted. Its function is as follows. Does not show antimicrobial, myotoxic, hemolytic and cell-promoting activities. This is Defensin-like peptide 2/4 from Ornithorhynchus anatinus (Duckbill platypus).